A 127-amino-acid polypeptide reads, in one-letter code: UPF0325 protein VV1_1856 (127 aa).

The protein belongs to the UPF0325 family.

This is UPF0325 protein VV1_1856 from Vibrio vulnificus (strain CMCP6).